The sequence spans 351 residues: Glycerol-3-phosphate dehydrogenase 1-like protein (351 aa).

12 to 17 (GSGNWG) contributes to the NAD(+) binding site. Lysine 122 contributes to the substrate binding site. Alanine 155 contacts NAD(+). The active-site Proton acceptor is lysine 206. Positions 271, 298, and 300 each coordinate NAD(+). 271–272 (RN) contacts substrate.

The protein belongs to the NAD-dependent glycerol-3-phosphate dehydrogenase family. Interacts with SCN5A.

It localises to the cytoplasm. It carries out the reaction sn-glycerol 3-phosphate + NAD(+) = dihydroxyacetone phosphate + NADH + H(+). In terms of biological role, plays a role in regulating cardiac sodium current; decreased enzymatic activity with resulting increased levels of glycerol 3-phosphate activating the DPD1L-dependent SCN5A phosphorylation pathway, may ultimately lead to decreased sodium current; cardiac sodium current may also be reduced due to alterations of NAD(H) balance induced by DPD1L. The chain is Glycerol-3-phosphate dehydrogenase 1-like protein (GPD1L) from Pongo abelii (Sumatran orangutan).